A 283-amino-acid polypeptide reads, in one-letter code: tRNA (guanine-N(1)-)-methyltransferase (283 aa).

Residues Gly113 and 133-138 (IGDYVL) contribute to the S-adenosyl-L-methionine site.

Belongs to the RNA methyltransferase TrmD family. As to quaternary structure, homodimer.

The protein resides in the cytoplasm. The catalysed reaction is guanosine(37) in tRNA + S-adenosyl-L-methionine = N(1)-methylguanosine(37) in tRNA + S-adenosyl-L-homocysteine + H(+). Specifically methylates guanosine-37 in various tRNAs. This is tRNA (guanine-N(1)-)-methyltransferase from Parafrankia sp. (strain EAN1pec).